The primary structure comprises 451 residues: Macrophage scavenger receptor types I and II (451 aa).

Residues 1–50 (MEQWDHFHNQQEDTDSCSESVKFDARSMTALLPPNPKNSPSLQEKLKSFK) are Cytoplasmic-facing. Phosphoserine is present on S27. Residues 51 to 76 (AALIALYLLVFAVLIPLIGIVAAQLL) traverse the membrane as a helical; Signal-anchor for type II membrane protein segment. Residues 77–109 (KWETKNCSVSSTNANDITQSLTGKGNDSEEEMR) form a spacer region. The Extracellular portion of the chain corresponds to 77–451 (KWETKNCSVS…SEDAGVTCTL (375 aa)). 7 N-linked (GlcNAc...) asparagine glycosylation sites follow: N82, N102, N143, N184, N221, N249, and N267. Residues 171-255 (NAIDEISKSL…VLNNITNDLR (85 aa)) are a coiled coil. The segment at 267–346 (NITLIQGPPG…EKGSGNTLTP (80 aa)) is disordered. The Collagen-like domain maps to 273–341 (GPPGPPGEKG…KGQKGEKGSG (69 aa)). Positions 350–450 (VRLVGGSGPH…HSEDAGVTCT (101 aa)) constitute an SRCR domain. Cystine bridges form between C375–C439, C388–C449, and C419–C429.

Homotrimer. Interacts with MYO18A. As to expression, isoform I, isoform II and isoform III are expressed in monocyte-derived macrophages. Isoform I and isoform II are expressed in the liver, placenta and brain.

The protein localises to the membrane. In terms of biological role, membrane glycoproteins implicated in the pathologic deposition of cholesterol in arterial walls during atherogenesis. Two types of receptor subunits exist. These receptors mediate the endocytosis of a diverse group of macromolecules, including modified low density lipoproteins (LDL). Isoform III does not internalize acetylated LDL. This Homo sapiens (Human) protein is Macrophage scavenger receptor types I and II (MSR1).